The sequence spans 375 residues: Chaperone protein DnaJ (375 aa).

A J domain is found at 4-68 (DYYEILGVSR…ETRARYDRFG (65 aa)). A CR-type zinc finger spans residues 135 to 217 (GGEKEIRISH…CDGKGANQVT (83 aa)). Zn(2+) is bound by residues cysteine 148, cysteine 151, cysteine 165, cysteine 168, cysteine 191, cysteine 194, cysteine 205, and cysteine 208. 4 CXXCXGXG motif repeats span residues 148 to 155 (CEVCSGSG), 165 to 172 (CSTCSGSG), 191 to 198 (CPTCNGTG), and 205 to 212 (CDACDGKG).

The protein belongs to the DnaJ family. Homodimer. Zn(2+) serves as cofactor.

It localises to the cytoplasm. Participates actively in the response to hyperosmotic and heat shock by preventing the aggregation of stress-denatured proteins and by disaggregating proteins, also in an autonomous, DnaK-independent fashion. Unfolded proteins bind initially to DnaJ; upon interaction with the DnaJ-bound protein, DnaK hydrolyzes its bound ATP, resulting in the formation of a stable complex. GrpE releases ADP from DnaK; ATP binding to DnaK triggers the release of the substrate protein, thus completing the reaction cycle. Several rounds of ATP-dependent interactions between DnaJ, DnaK and GrpE are required for fully efficient folding. Also involved, together with DnaK and GrpE, in the DNA replication of plasmids through activation of initiation proteins. In Nostoc punctiforme (strain ATCC 29133 / PCC 73102), this protein is Chaperone protein DnaJ.